Reading from the N-terminus, the 358-residue chain is MTEKTIVFKVGTSSLTQENGSLDRIKIARITNQLAQLHQKGYQIVLVTSGSIAAGFRRLGFDKRPTKIAEKQASAAVGQGLLIEEYTQNLMKDGIVSAQILLTQDDFADARRYQNASQALQVLLKQRAIPIINENDTIAIEEIKVGDNDTLSAQVASLLKADLLVLLTDVDGLYTANPNSDPTAQHLPQIKEITEDLFAMAAGAGSSNGTGGMTTKLQAAQIATKSGVPVFICSSKEDTALLQAVTQANRGTLFLADDHAMNQRKQWMAFYARTDAAVEVDAGAVDAMLHQGRSLLATGVKALEGDFEVGQVVEVYSQADHRLIGKGRVKLSSKDLQDQLANGRAEGVLIHRNDWVSL.

ATP is bound at residue K9. S49, D136, and N148 together coordinate substrate. ATP contacts are provided by residues 168–169 and 210–216; these read TD and TGGMTTK. The region spanning 275-353 is the PUA domain; the sequence is DAAVEVDAGA…RAEGVLIHRN (79 aa).

This sequence belongs to the glutamate 5-kinase family.

It is found in the cytoplasm. The catalysed reaction is L-glutamate + ATP = L-glutamyl 5-phosphate + ADP. Its pathway is amino-acid biosynthesis; L-proline biosynthesis; L-glutamate 5-semialdehyde from L-glutamate: step 1/2. Functionally, catalyzes the transfer of a phosphate group to glutamate to form L-glutamate 5-phosphate. This Streptococcus suis (strain 05ZYH33) protein is Glutamate 5-kinase.